Consider the following 916-residue polypeptide: Protein O-GlcNAcase (916 aa).

Residues 1-50 (MVQKESQAALEERESERNANPASVSGASLEPSAAPAPGEDNPSGAGAAAG) form a disordered region. The region spanning 60-336 (FLCGVVEGFY…TLATWYKSNM (277 aa)) is the GH84 domain. A protein contacts are provided by glycine 67, lysine 98, and aspartate 174. Catalysis depends on aspartate 175, which acts as the Proton donor. A protein is bound by residues tyrosine 219, 278–280 (WDN), aspartate 285, and asparagine 313. Residue serine 364 is modified to Phosphoserine. Residues 440 to 480 (QGAALSGEPSALTKEEEKKQPDEEPMDMVVEKQEESEHKSD) are disordered. 2 stretches are compositionally biased toward basic and acidic residues: residues 452 to 461 (TKEEEKKQPD) and 468 to 480 (VVEK…HKSD).

Belongs to the glycosyl hydrolase 84 family. As to quaternary structure, monomer. Interacts with CLOCK. In terms of processing, proteolytically cleaved by caspase-3 during apoptosis. The fragments interact with each other; cleavage does not decrease enzyme activity. In terms of tissue distribution, detected in spleen (at protein level). Ubiquitous. Expressed at highest levels in the brain and spleen.

It is found in the nucleus. Its subcellular location is the cytoplasm. The enzyme catalyses 3-O-(N-acetyl-beta-D-glucosaminyl)-L-seryl-[protein] + H2O = N-acetyl-D-glucosamine + L-seryl-[protein]. It carries out the reaction 3-O-(N-acetyl-beta-D-glucosaminyl)-L-threonyl-[protein] + H2O = L-threonyl-[protein] + N-acetyl-D-glucosamine. With respect to regulation, inhibited by Cu(2+), Hg(2+), Cd(2+) and Zn(2+) at 1 mM. Not inhibited by Co(2+), Mg(2+), Ca(2+), Mn(2+), Fe(3+) and EDTA. Also inhibited by sodium chloride at 1M and 2-amino-2-hydroxymethyl-1,3-propanediol (trishydroxymethylaminomethane) at 75 mM. Functionally, cleaves GlcNAc but not GalNAc from O-glycosylated proteins. Deglycosylates a large and diverse number of proteins, such as CRYAB, ELK1, GSDMD, LMNB1 and TAB1. Can use p-nitrophenyl-beta-GlcNAc and 4-methylumbelliferone-GlcNAc as substrates but not p-nitrophenyl-beta-GalNAc or p-nitrophenyl-alpha-GlcNAc (in vitro). Does not bind acetyl-CoA and does not have histone acetyltransferase activity. Lacks enzyme activity. The protein is Protein O-GlcNAcase of Rattus norvegicus (Rat).